Here is a 145-residue protein sequence, read N- to C-terminus: MKGLLQRVRNARVEVGGEVVGAIDQGILVLVGIEPQDTRASADKLLHKLLNYRVFSDADGKMNLSLREVGGGLLLVSQFTLAADTKSGLRAGFSKAAAPALGAELFDYLLSQARIAHTAVAAGQFGADMQVHLINDGPVTFLFDT.

The Gly-cisPro motif, important for rejection of L-amino acids motif lies at 137–138; the sequence is GP.

This sequence belongs to the DTD family. Homodimer.

The protein localises to the cytoplasm. It carries out the reaction glycyl-tRNA(Ala) + H2O = tRNA(Ala) + glycine + H(+). The enzyme catalyses a D-aminoacyl-tRNA + H2O = a tRNA + a D-alpha-amino acid + H(+). In terms of biological role, an aminoacyl-tRNA editing enzyme that deacylates mischarged D-aminoacyl-tRNAs. Also deacylates mischarged glycyl-tRNA(Ala), protecting cells against glycine mischarging by AlaRS. Acts via tRNA-based rather than protein-based catalysis; rejects L-amino acids rather than detecting D-amino acids in the active site. By recycling D-aminoacyl-tRNA to D-amino acids and free tRNA molecules, this enzyme counteracts the toxicity associated with the formation of D-aminoacyl-tRNA entities in vivo and helps enforce protein L-homochirality. The sequence is that of D-aminoacyl-tRNA deacylase from Pseudomonas savastanoi pv. phaseolicola (strain 1448A / Race 6) (Pseudomonas syringae pv. phaseolicola (strain 1448A / Race 6)).